Consider the following 482-residue polypeptide: UDP-N-acetylmuramate--L-alanine ligase (482 aa).

Gly122–Thr128 contacts ATP.

The protein belongs to the MurCDEF family.

It is found in the cytoplasm. It carries out the reaction UDP-N-acetyl-alpha-D-muramate + L-alanine + ATP = UDP-N-acetyl-alpha-D-muramoyl-L-alanine + ADP + phosphate + H(+). It participates in cell wall biogenesis; peptidoglycan biosynthesis. Its function is as follows. Cell wall formation. The protein is UDP-N-acetylmuramate--L-alanine ligase of Mycolicibacterium smegmatis (strain ATCC 700084 / mc(2)155) (Mycobacterium smegmatis).